The following is a 91-amino-acid chain: HssA/B-like protein 24 (91 aa).

This sequence belongs to the hssA/B family.

The chain is HssA/B-like protein 24 (hssl24) from Dictyostelium discoideum (Social amoeba).